The primary structure comprises 54 residues: uncharacterized protein (54 aa).

2 stretches are compositionally biased toward basic and acidic residues: residues 1 to 19 and 26 to 54; these read MTEK…HNDL and EELK…YDTK. Residues 1-54 form a disordered region; it reads MTEKKQQNKPNENPEHNDLTDPIPNEELKENMNDEKHKRQQRDNSQSERDYDTK.

This is an uncharacterized protein from Bacillus subtilis (strain 168).